A 441-amino-acid chain; its full sequence is MEQAPAPKISFVSLGCPKALVDSERIITRLRAEGYELARKHDGADIVIVNTCGFLDSAKQESLGAIGEAMAENGKVIVTGCMGAEPEQIEAAYPNVLSITGPQQYESVLEAVHRALPPIHNPHLDLMPPQGIKLTPRHYAYLKISEGCNNRCSFCIIPKLRGDLVSRPAAEVLREAEQLVKAGVKELLVVSQDTSAYGVDLKYAESQWQDRAVRARFYDLAKELGSLGAWVRLQYVYPYPHVDEVIELMAKGAVLPYLDIPFQHAASSVLTRMKRPAAQDKTLARIKRWRETCPDLALRSTFIVGFPGETEQEFAELLDWLEEAEIDRLGAFKYEPVQGAASNALPDQIPAEVKQQRWDALMARQQKISARRLKRKVGTRQQVIIDEAGPNGAKGRSKADAPQIDGHVYLSSRRPLRVGELVTAKIDRADAYDLHGTVAGF.

In terms of domain architecture, MTTase N-terminal spans Pro7–Pro117. [4Fe-4S] cluster contacts are provided by Cys16, Cys52, Cys81, Cys148, Cys152, and Cys155. Positions Leu134–Arg371 constitute a Radical SAM core domain. Residues Lys374–Gly440 enclose the TRAM domain.

This sequence belongs to the methylthiotransferase family. RimO subfamily. [4Fe-4S] cluster serves as cofactor.

The protein localises to the cytoplasm. It carries out the reaction L-aspartate(89)-[ribosomal protein uS12]-hydrogen + (sulfur carrier)-SH + AH2 + 2 S-adenosyl-L-methionine = 3-methylsulfanyl-L-aspartate(89)-[ribosomal protein uS12]-hydrogen + (sulfur carrier)-H + 5'-deoxyadenosine + L-methionine + A + S-adenosyl-L-homocysteine + 2 H(+). Its function is as follows. Catalyzes the methylthiolation of an aspartic acid residue of ribosomal protein uS12. This Rhodopseudomonas palustris (strain BisA53) protein is Ribosomal protein uS12 methylthiotransferase RimO.